A 229-amino-acid polypeptide reads, in one-letter code: Endonuclease NucS (229 aa).

This sequence belongs to the NucS endonuclease family.

The protein resides in the cytoplasm. In terms of biological role, cleaves both 3' and 5' ssDNA extremities of branched DNA structures. This Corynebacterium diphtheriae (strain ATCC 700971 / NCTC 13129 / Biotype gravis) protein is Endonuclease NucS.